The chain runs to 97 residues: UPF0729 protein GD16342 (97 aa).

The segment at 64–97 (KPEKASVGPAEESQNPPLNAIAAETEVDESKKEI) is disordered. Phosphoserine is present on S69.

Belongs to the UPF0729 family.

This chain is UPF0729 protein GD16342, found in Drosophila simulans (Fruit fly).